A 692-amino-acid polypeptide reads, in one-letter code: Elongation factor G (692 aa).

The region spanning 8–282 (ENTRNIGIMA…AVIDYLPSPL (275 aa)) is the tr-type G domain. GTP-binding positions include 17 to 24 (AHIDAGKT), 81 to 85 (DTPGH), and 135 to 138 (NKMD).

This sequence belongs to the TRAFAC class translation factor GTPase superfamily. Classic translation factor GTPase family. EF-G/EF-2 subfamily.

It is found in the cytoplasm. Catalyzes the GTP-dependent ribosomal translocation step during translation elongation. During this step, the ribosome changes from the pre-translocational (PRE) to the post-translocational (POST) state as the newly formed A-site-bound peptidyl-tRNA and P-site-bound deacylated tRNA move to the P and E sites, respectively. Catalyzes the coordinated movement of the two tRNA molecules, the mRNA and conformational changes in the ribosome. The polypeptide is Elongation factor G (Bacillus mycoides (strain KBAB4) (Bacillus weihenstephanensis)).